A 423-amino-acid polypeptide reads, in one-letter code: 26S proteasome regulatory subunit 6A homolog (423 aa).

Residue 211–218 coordinates ATP; that stretch reads GPPGTGKT.

The protein belongs to the AAA ATPase family.

The protein resides in the cytoplasm. It localises to the nucleus. The 26S proteasome is involved in the ATP-dependent degradation of ubiquitinated proteins. The regulatory (or ATPase) complex confers ATP dependency and substrate specificity to the 26S complex. The sequence is that of 26S proteasome regulatory subunit 6A homolog (TBP1) from Solanum lycopersicum (Tomato).